A 278-amino-acid polypeptide reads, in one-letter code: Cytoplasmic envelopment protein 1 (278 aa).

Belongs to the herpesviridae cytoplasmic envelopment protein 1 family. Interacts with BSRF1 tegument protein; the BBRF2-BSRF1 complexes oligomerize and might play a role in tethering the viral nucleocapsids to the host Golgi membrane during secondary envelopment.

Its subcellular location is the virion. The protein localises to the virion tegument. It localises to the host cytoplasm. The protein resides in the host Golgi apparatus. Its function is as follows. Plays a critical role in cytoplasmic virus egress. Participates in the final step of tegumentation and envelope acquisition within the host cytoplasm. In Homo sapiens (Human), this protein is Cytoplasmic envelopment protein 1.